The following is a 573-amino-acid chain: DNA polymerase lambda (573 aa).

One can recognise a BRCT domain in the interval aspartate 35–leucine 131. The disordered stretch occupies residues threonine 126 to glycine 235. Residues aspartate 127 to aspartate 149 show a composition bias toward polar residues. Residues lysine 263–tyrosine 277 are DNA-binding. Lysine 310 serves as the catalytic Schiff-base intermediate with DNA. Positions glycine 343–threonine 346 are DNA-binding. DCTP-binding positions include arginine 384, serine 415 to arginine 418, and glycine 424 to aspartate 427. Residues arginine 418–aspartate 427 are involved in primer binding. Mn(2+) contacts are provided by aspartate 425, aspartate 427, and aspartate 488. The interval glutamate 464–tyrosine 503 is DNA-binding. Asparagine 511 is a dCTP binding site.

The protein belongs to the DNA polymerase type-X family. Interacts with PCNA. Interacts with PAXX; promoting POLL recruitment to double-strand breaks (DSBs) and stimulation of the end-filling activity of POLL. Interacts with XRCC4; promoting POLL recruitment to double-strand breaks (DSBs) and stimulation of the end-filling activity of POLL. Interacts with NHEJ1/XLF; promoting POLL recruitment to double-strand breaks (DSBs) and stimulation of the end-filling activity of POLL. The cofactor is Mn(2+).

It localises to the nucleus. The enzyme catalyses DNA(n) + a 2'-deoxyribonucleoside 5'-triphosphate = DNA(n+1) + diphosphate. DNA polymerase that functions in several pathways of DNA repair. Involved in base excision repair (BER) responsible for repair of lesions that give rise to abasic (AP) sites in DNA. Also contributes to DNA double-strand break repair by non-homologous end joining and homologous recombination. Has both template-dependent and template-independent (terminal transferase) DNA polymerase activities. Also has a 5'-deoxyribose-5-phosphate lyase (dRP lyase) activity. The sequence is that of DNA polymerase lambda from Rattus norvegicus (Rat).